The primary structure comprises 145 residues: UPF0260 protein VC_1058 (145 aa).

The protein belongs to the UPF0260 family.

This chain is UPF0260 protein VC_1058, found in Vibrio cholerae serotype O1 (strain ATCC 39315 / El Tor Inaba N16961).